The chain runs to 310 residues: Vomeronasal type-1 receptor 101 (310 aa).

Residues 1–19 (MNKVNILPSDTNMKITLFS) are Extracellular-facing. Residues 20–40 (ELSVGISANSILFFAHLCMFF) traverse the membrane as a helical segment. The Cytoplasmic portion of the chain corresponds to 41-49 (EENRSKPID). A helical transmembrane segment spans residues 50-70 (LCIAFLSLTQLMLLVTMGLIA). Over 71-93 (ADMFMAQGIWDITTCRSLIYFHR) the chain is Extracellular. A disulfide bridge links C85 with C172. A helical transmembrane segment spans residues 94-114 (LLRGFNLCAACLLHILWTFTL). Residues 115 to 134 (SPRSSCLTKFKHKSPHHISG) are Cytoplasmic-facing. Residues 135 to 155 (AYLFFCVLYMSFSSHLFVLVI) traverse the membrane as a helical segment. Topologically, residues 156-193 (ATSNLTSDHFMYVTQSCSLLPMSYSRTSTFSLLMVTRE) are extracellular. A glycan (N-linked (GlcNAc...) asparagine) is linked at N159. A helical membrane pass occupies residues 194-214 (VFLISLMALSSGYMVTLLWRH). Residues 215-238 (KKQAQHLHSTRLSSKASPQQRATR) are Cytoplasmic-facing. Residues 239–259 (TILLLMTFFVVFYILGTVIFH) form a helical membrane-spanning segment. Residues 260–268 (SRTKFKDGS) lie on the Extracellular side of the membrane. Residues 269 to 289 (IFYCVQIIVSHSYATISPFVF) traverse the membrane as a helical segment. Over 290–310 (VFSEKRIIKFFRSMCGRIVNT) the chain is Cytoplasmic.

It belongs to the G-protein coupled receptor 1 family. As to expression, expressed in 1-4% of neurons of the vomeronasal organ. Only one pheromone receptor gene may be expressed in a particular neuron. Not expressed in the main olfactory epithelium.

Its subcellular location is the cell membrane. In terms of biological role, putative pheromone receptor implicated in the regulation of social as well as reproductive behavior. In Rattus norvegicus (Rat), this protein is Vomeronasal type-1 receptor 101 (Vom1r101).